Reading from the N-terminus, the 117-residue chain is Con-Ins T3 (117 aa).

The first 24 residues, 1-24 (MTTSFYFLLMALGLLLYVCQSSFG), serve as a signal peptide directing secretion. Positions 25–29 (NQHTR) are excised as a propeptide. Pro34 bears the 4-hydroxyproline; partial mark. Intrachain disulfides connect Cys38-Cys101, Cys50-Cys114, and Cys100-Cys105. Residues 53 to 94 (KRNDAGKKRGQASPLWQRGGSLSMLKARAKRNEAFHLQRAHR) constitute a propeptide, c peptide. The residue at position 98 (Glu98) is a 4-carboxyglutamate. Glu109 carries the 4-carboxyglutamate; partial modification. Residue Cys114 is modified to Cysteine amide. Positions 116–117 (NS) are excised as a propeptide.

It belongs to the insulin family. As to quaternary structure, heterodimer of A and B chains; disulfide-linked. As to expression, expressed by the venom gland.

It localises to the secreted. In terms of biological role, this venom insulin facilitates prey capture by rapidly inducing hypoglycemic shock. It is one of the smallest known insulin found in nature and lacks the C-terminal segment of the B chain that, in human insulin, mediates engagement of the insulin receptor (INSR) and assembly of the hormone's hexameric storage form. Despite lacking this segment, it both binds and activates human insulin receptor (long isoform (HIR-B) OF INSR) with only a 10-fold lower potency. In vivo, intraperitoneal injection of this peptide into zebrafish lowers blood glucose with the same potency than human insulin. In addition, when applied to water, this peptide reduces overall locomotor activity of zebrafish larvae, observed as a significant decrease in the percentage of time spent swimming and movement frequency. The sequence is that of Con-Ins T3 from Conus tulipa (Fish-hunting cone snail).